The primary structure comprises 126 residues: Heterotrimeric G protein gamma subunit GPG1 (126 aa).

As to quaternary structure, g proteins are composed of 3 units, alpha, beta and gamma. GPG1 interacts with the beta subunits GBP1 and GPB2.

The protein localises to the cytoplasm. In terms of biological role, gamma subunit of a guanine nucleotide-binding protein (G protein). G proteins are involved as modulators or transducers in various transmembrane signaling systems. The beta and gamma chains are required for the GTPase activity, for replacement of GDP by GTP, and for G protein-effector interaction. Involved in the determination of the cAMP level according to nutritional conditions, most probably as a regulator of cAMP phosphodiesterase. Required for the control of pseudohyphal and haploid invasive growth. This Saccharomyces cerevisiae (strain ATCC 204508 / S288c) (Baker's yeast) protein is Heterotrimeric G protein gamma subunit GPG1 (GPG1).